The chain runs to 227 residues: PKHD-type hydroxylase CC_0027 (227 aa).

A Fe2OG dioxygenase domain is found at 78-178 (TILSPMFNRY…RTASFFWIQS (101 aa)). Residues H96, D98, and H159 each contribute to the Fe cation site. 2-oxoglutarate is bound at residue R169.

Fe(2+) is required as a cofactor. The cofactor is L-ascorbate.

The sequence is that of PKHD-type hydroxylase CC_0027 from Caulobacter vibrioides (strain ATCC 19089 / CIP 103742 / CB 15) (Caulobacter crescentus).